A 919-amino-acid chain; its full sequence is Sarcosine dehydrogenase, mitochondrial (919 aa).

A mitochondrion-targeting transit peptide spans 1–22 (MASLSRVLRVAATCPRGRAAWN). N6-succinyllysine is present on Lys-38. Position 109 is a tele-8alpha-FAD histidine (His-109). N6-acetyllysine; alternate is present on Lys-174. The residue at position 174 (Lys-174) is an N6-succinyllysine; alternate. Lys-278, Lys-378, Lys-392, and Lys-535 each carry N6-succinyllysine. N6-acetyllysine occurs at positions 560 and 776. Tyr-778 is modified (phosphotyrosine). N6-acetyllysine; alternate occurs at positions 803, 885, and 905. Residues Lys-803, Lys-885, and Lys-905 each carry the N6-succinyllysine; alternate modification.

The protein belongs to the GcvT family. FAD serves as cofactor.

The protein resides in the mitochondrion matrix. It carries out the reaction (6S)-5,6,7,8-tetrahydrofolyl-(gamma-L-Glu)(n) + sarcosine + oxidized [electron-transfer flavoprotein] + H(+) = (6R)-5,10-methylenetetrahydrofolyl-(gamma-L-Glu)(n) + reduced [electron-transfer flavoprotein] + glycine. It participates in amine and polyamine degradation; sarcosine degradation; formaldehyde and glycine from sarcosine: step 1/1. Functionally, catalyzes the last step of the oxidative degradation of choline to glycine. Converts sarcosine into glycine. This Mus musculus (Mouse) protein is Sarcosine dehydrogenase, mitochondrial.